The chain runs to 279 residues: tRNA (guanine-N(1)-)-methyltransferase (279 aa).

S-adenosyl-L-methionine-binding positions include Gly-117 and 141–146 (LGDYVL). A disordered region spans residues 256-279 (WTPDGSGFRAGGDPVADSSDTNEP).

It belongs to the RNA methyltransferase TrmD family. As to quaternary structure, homodimer.

Its subcellular location is the cytoplasm. The catalysed reaction is guanosine(37) in tRNA + S-adenosyl-L-methionine = N(1)-methylguanosine(37) in tRNA + S-adenosyl-L-homocysteine + H(+). Its function is as follows. Specifically methylates guanosine-37 in various tRNAs. The sequence is that of tRNA (guanine-N(1)-)-methyltransferase from Kineococcus radiotolerans (strain ATCC BAA-149 / DSM 14245 / SRS30216).